The primary structure comprises 520 residues: Keratin, type II cytoskeletal 72 (520 aa).

A head region spans residues 1 to 133 (MSRQLTLYPG…DPEIQKVRAQ (133 aa)). Positions 134–169 (EREQIKALNNKFASFIDKVRFLEQQNQVLETKWELL) are coil 1A. In terms of domain architecture, IF rod spans 134–447 (EREQIKALNN…KLLESEESRM (314 aa)). A linker 1 region spans residues 170–188 (QQLDLNNSKRSLEPVHESY). Residues 189-280 (ISNLQKQLEI…VLFEGEIAQM (92 aa)) form a coil 1B region. The tract at residues 281 to 304 (QSHISDTSVILSMDNNRQLDLDSI) is linker 12. A coil 2 region spans residues 305 to 443 (LAEVRAQYEE…ATYRKLLESE (139 aa)). Positions 444–520 (ESRMAGEYPN…SSGTTKKTSR (77 aa)) are tail. The interval 494–520 (KGSCGSELKDPPAKTSGSSGTTKKTSR) is disordered. The span at 507–520 (KTSGSSGTTKKTSR) shows a compositional bias: low complexity.

This sequence belongs to the intermediate filament family. In terms of assembly, heterotetramer of two type I and two type II keratins.

Has a role in hair formation. Specific component of keratin intermediate filaments in the inner root sheath (IRS) of the hair follicle. This Mus musculus (Mouse) protein is Keratin, type II cytoskeletal 72 (Krt72).